We begin with the raw amino-acid sequence, 212 residues long: Large ribosomal subunit protein uL3 (212 aa).

A disordered region spans residues 131–155; the sequence is RGNMTHGSKNHRLPGSTGAGTTPGR.

This sequence belongs to the universal ribosomal protein uL3 family. As to quaternary structure, part of the 50S ribosomal subunit. Forms a cluster with proteins L14 and L19.

Functionally, one of the primary rRNA binding proteins, it binds directly near the 3'-end of the 23S rRNA, where it nucleates assembly of the 50S subunit. In Microcystis aeruginosa (strain NIES-843 / IAM M-2473), this protein is Large ribosomal subunit protein uL3.